The primary structure comprises 371 residues: Glutamate 5-kinase (371 aa).

Lysine 10 contributes to the ATP binding site. Substrate contacts are provided by serine 50, aspartate 137, and asparagine 149. ATP-binding positions include 169–170 (SD) and 208–214 (TGGMFTK). One can recognise a PUA domain in the interval 274 to 352 (EGRIYIDDGA…EEIRNILGED (79 aa)).

Belongs to the glutamate 5-kinase family.

The protein resides in the cytoplasm. The catalysed reaction is L-glutamate + ATP = L-glutamyl 5-phosphate + ADP. The protein operates within amino-acid biosynthesis; L-proline biosynthesis; L-glutamate 5-semialdehyde from L-glutamate: step 1/2. Catalyzes the transfer of a phosphate group to glutamate to form L-glutamate 5-phosphate. The polypeptide is Glutamate 5-kinase (Dictyoglomus turgidum (strain DSM 6724 / Z-1310)).